The primary structure comprises 592 residues: Outer spore wall assembly protein SHE10 (592 aa).

The N-terminal stretch at 1-23 (MRFFKRFLLTLTVFIYTLRYLHC) is a signal peptide. Coiled coils occupy residues 354-385 (ENNISTNLTNTIDELDKNIQEIHEHHVELYEE) and 448-583 (LNQF…KQMG). A compositionally biased stretch (basic and acidic residues) spans 507 to 580 (QSEQEERIKS…EVRKQEEARK (74 aa)). Residues 507–592 (QSEQEERIKS…GSPPPPQQQQ (86 aa)) are disordered.

Belongs to the SHE10 family. In terms of assembly, component of the mitochondria-localized RNase mitochondrial RNA-processing (RNase MRP) composed of one single RNA encoded by the NME1 gene and at least 31 proteins. Absent in the nucleus-localized RNase MRP (NuMRP).

It is found in the mitochondrion. Involved in spore wall assembly. May be a component of the mitochondrial RNase MRP (MtMRP), a ribonucleoprotein endoribonuclease involved in the cleaving RNA transcripts to generate primers for DNA replication in mitochondria. The polypeptide is Outer spore wall assembly protein SHE10 (Vanderwaltozyma polyspora (strain ATCC 22028 / DSM 70294 / BCRC 21397 / CBS 2163 / NBRC 10782 / NRRL Y-8283 / UCD 57-17) (Kluyveromyces polysporus)).